A 367-amino-acid chain; its full sequence is Mitochondrial distribution and morphology protein 34 (367 aa).

The region spanning 1-197 (MSFNFTWPEF…LPSIIHRLSQ (197 aa)) is the SMP-LTD domain. Disordered stretches follow at residues 267–311 (QGLK…ALSS) and 347–367 (PAHR…FHLS). The span at 286–302 (FHTTSRVRVPSSLESNA) shows a compositional bias: polar residues.

This sequence belongs to the MDM34 family. Component of the ER-mitochondria encounter structure (ERMES) or MDM complex, composed of MMM1, MDM10, MDM12 and MDM34.

Its subcellular location is the mitochondrion outer membrane. In terms of biological role, component of the ERMES/MDM complex, which serves as a molecular tether to connect the endoplasmic reticulum (ER) and mitochondria. Components of this complex are involved in the control of mitochondrial shape and protein biogenesis, and function in nonvesicular lipid trafficking between the ER and mitochondria. MDM34 is required for the interaction of the ER-resident membrane protein MMM1 and the outer mitochondrial membrane-resident beta-barrel protein MDM10. This is Mitochondrial distribution and morphology protein 34 from Malassezia globosa (strain ATCC MYA-4612 / CBS 7966) (Dandruff-associated fungus).